The primary structure comprises 901 residues: Desmocollin-2 (901 aa).

A signal peptide spans 1-27; the sequence is MEAARPSGSWNGALCRLLLLTLAILIF. A propeptide spanning residues 28–135 is cleaved from the precursor; that stretch reads ASDACKNVTL…KEKVLRRAKR (108 aa). N-linked (GlcNAc...) asparagine glycans are attached at residues Asn34 and Asn166. Cadherin domains lie at 136–243, 244–355, 356–471, 472–579, and 580–694; these read RWAP…YPIF, TEET…LPTF, TRTS…GPEC, NPPI…FIPK, and KTVI…QLGK. At 136 to 694 the chain is on the extracellular side; that stretch reads RWAPIPCSML…IGGGGVQLGK (559 aa). N-linked (GlcNAc...) (complex) asparagine glycosylation is present at Asn392. N-linked (GlcNAc...) asparagine glycosylation is found at Asn546 and Asn629. Residues 695-715 traverse the membrane as a helical segment; that stretch reads WAILAILLGIALLFCILFTLV. The Cytoplasmic segment spans residues 716-901; the sequence is CGASGTSKQP…RTLAEACMKR (186 aa). 3 positions are modified to phosphoserine: Ser864, Ser868, and Ser873.

As to quaternary structure, interacts with DSP, PKP2 and JUP. Interacts with DSG3; the interaction may limit the interaction of DSC3 with p38MAPK family members and therefore repress p38MAPK signaling activation. In terms of tissue distribution, expressed at intercalated disks in the heart, where it is colocalized with CDH2 (at protein level). Expressed in intestinal mucosal cells (at protein level).

It is found in the cell membrane. The protein resides in the cell junction. Its subcellular location is the desmosome. A component of desmosome cell-cell junctions which are required for positive regulation of cellular adhesion. Promotes timely incorporation of DSG2 into desmosome intercellular junctions and promotes interaction of desmosome cell junctions with intermediate filament cytokeratin, via modulation of DSP phosphorylation. Plays an important role in desmosome-mediated maintenance of intestinal epithelial cell intercellular adhesion strength and barrier function. Positively regulates wound healing of intestinal mucosa via promotion of epithelial cell migration, and also plays a role in mechanotransduction of force between intestinal epithelial cells and extracellular matrix. May contribute to epidermal cell positioning (stratification) by mediating differential adhesiveness between cells that express different isoforms. May promote p38MAPK signaling activation that facilitates keratinocyte migration. This is Desmocollin-2 from Homo sapiens (Human).